Consider the following 389-residue polypeptide: Tubby-like F-box protein 11 (389 aa).

The region spanning 36–82 is the F-box domain; that stretch reads DYRWSEIPEELLREILIRVEAADGGGWPSRRSVVACAGVCRGWRLLM. The interval 250–289 is disordered; sequence STMEPQGVASEPSEFPLLGTRSTLSRSQSKPLRSSSSHLK. The span at 273 to 286 shows a compositional bias: low complexity; the sequence is LSRSQSKPLRSSSS.

This sequence belongs to the TUB family. Ubiquitous.

The chain is Tubby-like F-box protein 11 from Arabidopsis thaliana (Mouse-ear cress).